The following is a 349-amino-acid chain: Interferon regulatory factor 2 (349 aa).

A DNA-binding region (IRF tryptophan pentad repeat) is located at residues 5 to 113 (RMRMRPWLEE…NAFRVYRMLP (109 aa)). 2 positions are modified to N6-acetyllysine: Lys-75 and Lys-78. The tract at residues 117 to 148 (RPSKKGKKPKTEKEDKVKHIKQEPVESSLGLS) is disordered. The segment covering 125-140 (PKTEKEDKVKHIKQEP) has biased composition (basic and acidic residues). A Glycyl lysine isopeptide (Lys-Gly) (interchain with G-Cter in SUMO); alternate cross-link involves residue Lys-137. A Glycyl lysine isopeptide (Lys-Gly) (interchain with G-Cter in SUMO2); alternate cross-link involves residue Lys-137. Residue Lys-166 forms a Glycyl lysine isopeptide (Lys-Gly) (interchain with G-Cter in SUMO) linkage. Phosphoserine is present on Ser-225. Positions 228–239 (SSYAESETTDSV) are enriched in polar residues. The disordered stretch occupies residues 228 to 251 (SSYAESETTDSVPSDEESAEGRPH). Residue Lys-260 forms a Glycyl lysine isopeptide (Lys-Gly) (interchain with G-Cter in SUMO2) linkage. Residue Lys-293 forms a Glycyl lysine isopeptide (Lys-Gly) (interchain with G-Cter in SUMO) linkage. Residues 297–349 (NPVPYNSSWPPFQDLPLSSSMTPASSSSRPDRETRASVIKKTSDITQARVKSC) form a disordered region. Residues 314 to 324 (SSSMTPASSSS) are compositionally biased toward low complexity.

This sequence belongs to the IRF family. In terms of assembly, interacts with BRD7, IRF2BP1 and IRF2BP2. Interacts with CREBBP in growing cells; the interaction acetylates IRF2 and regulates IRF2-dependent H4 promoter activity. Acetylated by CBP/ p300 during cell-growth. Acetylation on Lys-75 is required for stimulation of H4 promoter activity. Post-translationally, the major sites of sumoylation are Lys-137 and Lys-293. Sumoylation with SUMO1 increases its transcriptional repressor activity on IRF1 and diminishes its ability to activate ISRE and H4 promoter. In terms of tissue distribution, expressed throughout the epithelium of the colon. Also expressed in lamina propria.

It is found in the nucleus. Its function is as follows. Specifically binds to the upstream regulatory region of type I IFN and IFN-inducible MHC class I genes (the interferon consensus sequence (ICS)) and represses those genes. Also acts as an activator for several genes including H4 and IL7. Constitutively binds to the ISRE promoter to activate IL7. Involved in cell cycle regulation through binding the site II (HiNF-M) promoter region of H4 and activating transcription during cell growth. Antagonizes IRF1 transcriptional activation. The polypeptide is Interferon regulatory factor 2 (IRF2) (Homo sapiens (Human)).